A 244-amino-acid polypeptide reads, in one-letter code: Probable phosphatase NT01CX_1282 (244 aa).

Residues histidine 8, histidine 10, histidine 16, histidine 41, glutamate 74, histidine 102, histidine 132, aspartate 193, and histidine 195 each contribute to the Zn(2+) site.

Belongs to the PHP family. It depends on Zn(2+) as a cofactor.

The sequence is that of Probable phosphatase NT01CX_1282 from Clostridium novyi (strain NT).